The primary structure comprises 433 residues: Histidinol dehydrogenase (433 aa).

Residues Y129, Q191, and N214 each coordinate NAD(+). Substrate is bound by residues S237, Q259, and H262. Q259 and H262 together coordinate Zn(2+). Active-site proton acceptor residues include E326 and H327. Residues H327, D360, E414, and H419 each coordinate substrate. Zn(2+) is bound at residue D360. H419 contributes to the Zn(2+) binding site.

The protein belongs to the histidinol dehydrogenase family. Requires Zn(2+) as cofactor.

It carries out the reaction L-histidinol + 2 NAD(+) + H2O = L-histidine + 2 NADH + 3 H(+). It functions in the pathway amino-acid biosynthesis; L-histidine biosynthesis; L-histidine from 5-phospho-alpha-D-ribose 1-diphosphate: step 9/9. In terms of biological role, catalyzes the sequential NAD-dependent oxidations of L-histidinol to L-histidinaldehyde and then to L-histidine. This Methanosarcina barkeri (strain Fusaro / DSM 804) protein is Histidinol dehydrogenase.